Here is a 530-residue protein sequence, read N- to C-terminus: Inactive ubiquitin carboxyl-terminal hydrolase 17-like protein 7 (530 aa).

The 296-residue stretch at 80–375 (AGLQKIGNTF…QAYVLFYIQK (296 aa)) folds into the USP domain. Residues 382–392 (SESVSRGREPR) show a composition bias toward basic and acidic residues. Disordered regions lie at residues 382 to 412 (SESV…KRDH), 431 to 454 (ESTL…NVRK), and 490 to 530 (SSTK…LVCQ). The span at 490-512 (SSTKPTDQESMNTGTLASLQGST) shows a compositional bias: polar residues. Over residues 513 to 524 (RRSKGNNKHSKR) the composition is skewed to basic residues.

It belongs to the peptidase C19 family. USP17 subfamily.

It is found in the nucleus. Its subcellular location is the endoplasmic reticulum. The protein is Inactive ubiquitin carboxyl-terminal hydrolase 17-like protein 7 (USP17L7) of Homo sapiens (Human).